The primary structure comprises 479 residues: Protein phosphatase 1B (479 aa).

A compositionally biased stretch (basic and acidic residues) spans 1-14 (MGAFLDKPKTEKHN). Positions 1-20 (MGAFLDKPKTEKHNAHGAGN) are disordered. Glycine 2 is lipidated: N-myristoyl glycine. Residue lysine 12 forms a Glycyl lysine isopeptide (Lys-Gly) (interchain with G-Cter in ISG15) linkage. A PPM-type phosphatase domain is found at 23 to 295 (RYGLSSMQGW…DNMSIVLVCF (273 aa)). 2 residues coordinate Mn(2+): aspartate 60 and glycine 61. A Glycyl lysine isopeptide (Lys-Gly) (interchain with G-Cter in ISG15) cross-link involves residue lysine 142. Aspartate 243 and aspartate 286 together coordinate Mn(2+). The residue at position 386 (serine 386) is a Phosphoserine. Positions 423–479 (VEGEESPAEPAATATSSNSDAGNPVTMQESHTESESGLAELDSSNEDAGTKMSGEKI) are disordered. Positions 430-439 (AEPAATATSS) are enriched in low complexity. Polar residues predominate over residues 440-451 (NSDAGNPVTMQE).

Belongs to the PP2C family. In terms of assembly, monomer. Interacts with PAK6. Interacts with the phosphorylated form of IKBKB/IKKB. Requires Mg(2+) as cofactor. Mn(2+) serves as cofactor. In terms of processing, isgylation negatively regulates its activity. Post-translationally, N-myristoylation is essential for the recognition of its substrates for dephosphorylation. Highly expressed in heart and skeletal muscle.

It localises to the cytoplasm. The protein localises to the cytosol. The protein resides in the membrane. It carries out the reaction O-phospho-L-seryl-[protein] + H2O = L-seryl-[protein] + phosphate. The catalysed reaction is O-phospho-L-threonyl-[protein] + H2O = L-threonyl-[protein] + phosphate. Enzyme with a broad specificity. Dephosphorylates CDK2 and CDK6 in vitro. Dephosphorylates PRKAA1 and PRKAA2. Inhibits TBK1-mediated antiviral signaling by dephosphorylating it at 'Ser-172'. Plays an important role in the termination of TNF-alpha-mediated NF-kappa-B activation through dephosphorylating and inactivating IKBKB/IKKB. This Homo sapiens (Human) protein is Protein phosphatase 1B (PPM1B).